Here is a 332-residue protein sequence, read N- to C-terminus: Autoinducer 2 import system permease protein LsrD (332 aa).

Helical transmembrane passes span 7–27 (YSWE…FGLI), 45–65 (ICIG…GMDI), 70–90 (TIGL…PLPL), 91–111 (AIII…GLII), 118–138 (LVIT…LSGM), 162–182 (FLGI…FWLL), 216–236 (VYAM…SYFG), 240–260 (SDLG…GGAN), 261–281 (IYGG…VGFL), and 288–308 (AGVP…VVVV).

The protein belongs to the binding-protein-dependent transport system permease family. AraH/RbsC subfamily. The complex is composed of two ATP-binding proteins (LsrA), two transmembrane proteins (LsrC and LsrD) and a solute-binding protein (LsrB).

The protein resides in the cell inner membrane. Part of the ABC transporter complex LsrABCD involved in autoinducer 2 (AI-2) import. Probably responsible for the translocation of the substrate across the membrane. The protein is Autoinducer 2 import system permease protein LsrD (lsrD) of Salmonella paratyphi B (strain ATCC BAA-1250 / SPB7).